The following is a 373-amino-acid chain: Mitochondrial fission regulator 2 (373 aa).

S136 is modified (phosphoserine). The stretch at 151-179 forms a coiled coil; that stretch reads VSEAAIKKIAALEDELTSLRAQIAAIVAM. Disordered stretches follow at residues 189-331 and 346-373; these read GFIS…WDPV and DDSF…GSRF. Pro residues predominate over residues 224–239; the sequence is SPPPLPPPPPPLPPPQ. 2 stretches are compositionally biased toward basic and acidic residues: residues 275-287 and 297-310; these read KKTD…ESQR and VLKD…RPVE. Phosphoserine is present on residues S312 and S348. Residues 354–373 are compositionally biased toward polar residues; sequence RSWQGSPFSSPETSRNGSRF.

It belongs to the MTFR1 family.

Its subcellular location is the mitochondrion. Its function is as follows. May play a role in mitochondrial aerobic respiration essentially in the testis. Can also promote mitochondrial fission. This Rattus norvegicus (Rat) protein is Mitochondrial fission regulator 2 (Mtfr2).